Reading from the N-terminus, the 126-residue chain is Histone H2B type 1-K (126 aa).

The segment covering 1-12 (MPEPAKSAPAPK) has biased composition (low complexity). The disordered stretch occupies residues 1–36 (MPEPAKSAPAPKKGSKKAVTKAQKIDGKKRKRSRKE). The residue at position 2 (Pro-2) is an N-acetylproline. ADP-ribosyl glutamic acid is present on Glu-3. The residue at position 6 (Lys-6) is an N6-(2-hydroxyisobutyryl)lysine; alternate. Lys-6 carries the N6-(beta-hydroxybutyryl)lysine; alternate modification. Lys-6 is modified (N6-acetyllysine; alternate). N6-butyryllysine; alternate is present on Lys-6. Lys-6 bears the N6-crotonyllysine; alternate mark. Lys-6 is modified (N6-lactoyllysine; alternate). Residue Lys-6 forms a Glycyl lysine isopeptide (Lys-Gly) (interchain with G-Cter in SUMO2); alternate linkage. Ser-7 is subject to ADP-ribosylserine. N6-(beta-hydroxybutyryl)lysine; alternate is present on Lys-12. N6-acetyllysine; alternate is present on residues Lys-12 and Lys-13. Lys-12 and Lys-13 each carry N6-crotonyllysine; alternate. Lys-12 is subject to N6-lactoyllysine; alternate. N6-(2-hydroxyisobutyryl)lysine; alternate is present on Lys-13. Phosphoserine; by STK4/MST1 is present on Ser-15. N6-acetyllysine; alternate occurs at positions 16, 17, 21, and 24. An N6-crotonyllysine; alternate mark is found at Lys-16, Lys-17, Lys-21, Lys-24, and Lys-35. N6-lactoyllysine; alternate occurs at positions 16, 17, 21, and 24. N6-glutaryllysine; alternate is present on Lys-17. N6-(2-hydroxyisobutyryl)lysine; alternate occurs at positions 21, 24, and 35. Lys-21 carries the post-translational modification N6-(beta-hydroxybutyryl)lysine; alternate. Lys-21 carries the post-translational modification N6-butyryllysine; alternate. Lys-21 is covalently cross-linked (Glycyl lysine isopeptide (Lys-Gly) (interchain with G-Cter in SUMO2); alternate). Lys-35 carries the post-translational modification N6-(beta-hydroxybutyryl)lysine; alternate. Lys-35 carries the post-translational modification N6-glutaryllysine; alternate. At Lys-35 the chain carries N6-succinyllysine; alternate. Residue Lys-35 forms a Glycyl lysine isopeptide (Lys-Gly) (interchain with G-Cter in ubiquitin); alternate linkage. Glu-36 carries the polyADP-ribosyl glutamic acid modification. A Phosphoserine; by AMPK modification is found at Ser-37. Lys-44, Lys-47, and Lys-58 each carry N6-(2-hydroxyisobutyryl)lysine; alternate. The residue at position 44 (Lys-44) is an N6-lactoyllysine; alternate. N6-glutaryllysine; alternate occurs at positions 44 and 47. The residue at position 47 (Lys-47) is an N6-methyllysine; alternate. Lys-58 is subject to N6,N6-dimethyllysine; alternate. Arg-80 carries the post-translational modification Dimethylated arginine. Position 86 is an N6-(2-hydroxyisobutyryl)lysine; alternate (Lys-86). Lys-86 carries the N6-acetyllysine; alternate modification. Lys-86 carries the N6-lactoyllysine; alternate modification. Lys-86 carries the post-translational modification N6,N6,N6-trimethyllysine; alternate. Omega-N-methylarginine occurs at positions 87 and 93. At Lys-109 the chain carries N6-(2-hydroxyisobutyryl)lysine; alternate. Lys-109 is modified (N6-lactoyllysine; alternate). Lys-109 is modified (N6-glutaryllysine; alternate). Position 109 is an N6-methyllysine; alternate (Lys-109). A glycan (O-linked (GlcNAc) serine) is linked at Ser-113. The residue at position 116 (Thr-116) is a Phosphothreonine. N6-(2-hydroxyisobutyryl)lysine; alternate occurs at positions 117 and 121. Lys-117 carries the post-translational modification N6-(beta-hydroxybutyryl)lysine; alternate. N6-lactoyllysine; alternate occurs at positions 117 and 121. Lys-117 and Lys-121 each carry N6-glutaryllysine; alternate. 2 positions are modified to N6-succinyllysine; alternate: Lys-117 and Lys-121. Position 117 is an N6-methylated lysine; alternate (Lys-117). Lys-121 is covalently cross-linked (Glycyl lysine isopeptide (Lys-Gly) (interchain with G-Cter in ubiquitin); alternate).

Belongs to the histone H2B family. In terms of assembly, the nucleosome is a histone octamer containing two molecules each of H2A, H2B, H3 and H4 assembled in one H3-H4 heterotetramer and two H2A-H2B heterodimers. The octamer wraps approximately 147 bp of DNA. In terms of processing, monoubiquitination at Lys-35 (H2BK34Ub) by the MSL1/MSL2 dimer is required for histone H3 'Lys-4' (H3K4me) and 'Lys-79' (H3K79me) methylation and transcription activation at specific gene loci, such as HOXA9 and MEIS1 loci. Similarly, monoubiquitination at Lys-121 (H2BK120Ub) by the RNF20/40 complex gives a specific tag for epigenetic transcriptional activation and is also prerequisite for histone H3 'Lys-4' and 'Lys-79' methylation. It also functions cooperatively with the FACT dimer to stimulate elongation by RNA polymerase II. H2BK120Ub also acts as a regulator of mRNA splicing: deubiquitination by USP49 is required for efficient cotranscriptional splicing of a large set of exons. Post-translationally, phosphorylated on Ser-15 (H2BS14ph) by STK4/MST1 during apoptosis; which facilitates apoptotic chromatin condensation. Also phosphorylated on Ser-15 in response to DNA double strand breaks (DSBs), and in correlation with somatic hypermutation and immunoglobulin class-switch recombination. Phosphorylation at Ser-37 (H2BS36ph) by AMPK in response to stress promotes transcription. GlcNAcylation at Ser-113 promotes monoubiquitination of Lys-121. It fluctuates in response to extracellular glucose, and associates with transcribed genes. In terms of processing, ADP-ribosylated by PARP1 or PARP2 on Ser-7 (H2BS6ADPr) in response to DNA damage. H2BS6ADPr promotes recruitment of CHD1L. Mono-ADP-ribosylated on Glu-3 (H2BE2ADPr) by PARP3 in response to single-strand breaks. Poly ADP-ribosylation on Glu-36 (H2BE35ADPr) by PARP1 regulates adipogenesis: it inhibits phosphorylation at Ser-37 (H2BS36ph), thereby blocking expression of pro-adipogenetic genes. Post-translationally, crotonylation (Kcr) is specifically present in male germ cells and marks testis-specific genes in post-meiotic cells, including X-linked genes that escape sex chromosome inactivation in haploid cells. Crotonylation marks active promoters and enhancers and confers resistance to transcriptional repressors. It is also associated with post-meiotically activated genes on autosomes. Lactylated in macrophages by EP300/P300 by using lactoyl-CoA directly derived from endogenous or exogenous lactate, leading to stimulates gene transcription.

The protein resides in the nucleus. It localises to the chromosome. Core component of nucleosome. Nucleosomes wrap and compact DNA into chromatin, limiting DNA accessibility to the cellular machineries which require DNA as a template. Histones thereby play a central role in transcription regulation, DNA repair, DNA replication and chromosomal stability. DNA accessibility is regulated via a complex set of post-translational modifications of histones, also called histone code, and nucleosome remodeling. This chain is Histone H2B type 1-K, found in Bos taurus (Bovine).